A 309-amino-acid polypeptide reads, in one-letter code: Tagatose-6-phosphate kinase 1 (309 aa).

This sequence belongs to the carbohydrate kinase PfkB family. LacC subfamily.

It catalyses the reaction D-tagatofuranose 6-phosphate + ATP = D-tagatofuranose 1,6-bisphosphate + ADP + H(+). It functions in the pathway carbohydrate metabolism; D-tagatose 6-phosphate degradation; D-glyceraldehyde 3-phosphate and glycerone phosphate from D-tagatose 6-phosphate: step 1/2. In Streptococcus agalactiae serotype III (strain NEM316), this protein is Tagatose-6-phosphate kinase 1.